Here is a 192-residue protein sequence, read N- to C-terminus: Amelogenin, Y isoform (192 aa).

Positions 1–16 (MGTWILFACLLGAAYS) are cleaved as a signal peptide. The segment at 73 to 192 (QSPQNHALQP…TDKTKREEVD (120 aa)) is disordered. Positions 87 to 105 (PMVPAQQPVVPQQPMMPVP) are enriched in low complexity. Residues 108–117 (HSMTPIQHHQ) are compositionally biased toward polar residues. The span at 132-173 (PIQPQPHQPLQPQPPVHPIQRLPPQPPLPPIFPMQPLPPVLP) shows a compositional bias: pro residues.

The protein belongs to the amelogenin family.

Its subcellular location is the secreted. It is found in the extracellular space. It localises to the extracellular matrix. Its function is as follows. Plays a role in the biomineralization of teeth. Seems to regulate the formation of crystallites during the secretory stage of tooth enamel development. Thought to play a major role in the structural organization and mineralization of developing enamel. The polypeptide is Amelogenin, Y isoform (AMELY) (Bos taurus (Bovine)).